A 760-amino-acid polypeptide reads, in one-letter code: Striatin-4 (760 aa).

The disordered stretch occupies residues 1-65 (MMEERAAAAV…PTAGPEPLSL (65 aa)). The span at 7–35 (AAAVASAASSCRPLGSGTAPNPTAAAPAS) shows a compositional bias: low complexity. Residues 43-54 (PVGKGGGGGGSP) show a composition bias toward gly residues. Residue serine 53 is modified to Phosphoserine. The stretch at 69–136 (LHFIQHEWAR…QERAKYHKLK (68 aa)) forms a coiled coil. The interval 71–79 (FIQHEWARF) is caveolin-binding. The interval 165-182 (ENSPLVWKEGRQLLRQYL) is calmodulin-binding. A phosphoserine mark is found at serine 206, serine 223, and serine 276. Disordered regions lie at residues 210–233 (NGAG…SGGE) and 272–346 (EDED…PHEL). 2 stretches are compositionally biased toward acidic residues: residues 272-283 (EDEDSDEDDELD) and 302-317 (EMED…DAIN). Positions 332 to 346 (PDPRRCTSEGNPHEL) are enriched in basic and acidic residues. WD repeat units lie at residues 443 to 482 (SHYD…TAKK), 496 to 535 (AHRG…MDPY), 549 to 588 (GHGD…PSCL), 595 to 635 (GEHG…ALLT), 642 to 681 (SGPA…SVHS), 684 to 723 (AHLD…CVQE), and 730 to 759 (KHEE…AKVF).

It belongs to the WD repeat striatin family. Part of the core of STRIPAK complexes composed of PP2A catalytic and scaffolding subunits, the striatins (PP2A regulatory subunits), the striatin-associated proteins MOB4, STRIP1 and STRIP2, PDCD10 and members of the STE20 kinases, such as STK24 and STK26. Interacts with CTTNBP2NL. Mainly expressed in brain but is also expressed at low levels in the kidney.

It localises to the cytoplasm. The protein resides in the membrane. Its subcellular location is the cell projection. The protein localises to the dendritic spine. Its function is as follows. Calmodulin-binding scaffolding protein which is the center of the striatin-interacting phosphatase and kinase (STRIPAK) complexes. STRIPAK complexes have critical roles in protein (de)phosphorylation and are regulators of multiple signaling pathways including Hippo, MAPK, nuclear receptor and cytoskeleton remodeling. Different types of STRIPAK complexes are involved in a variety of biological processes such as cell growth, differentiation, apoptosis, metabolism and immune regulation. Key regulator of the expanded Hippo signaling pathway by interacting and allowing the inhibition of MAP4K kinases by the STRIPAK complex. The sequence is that of Striatin-4 (Strn4) from Mus musculus (Mouse).